Reading from the N-terminus, the 995-residue chain is Endosome/lysosome-associated apoptosis and autophagy regulator family member 2 (995 aa).

The N-terminal stretch at 1-21 is a signal peptide; the sequence is MGVFCWSGCLVISLQLLLGAA. At 22–895 the chain is on the extracellular side; the sequence is LDNLSTCKEE…ACESIDFWLK (874 aa). N-linked (GlcNAc...) asparagine glycans are attached at residues N24, N136, N245, N372, N527, N649, N683, N700, and N758. In terms of domain architecture, MRH spans 639–843; that stretch reads SECLVTYTNE…LWETAEACPL (205 aa). 2 cysteine pairs are disulfide-bonded: C641–C687 and C697–C725. 2 disulfide bridges follow: C793–C829 and C805–C841. A glycan (N-linked (GlcNAc...) asparagine) is linked at N883. The helical transmembrane segment at 896–916 threads the bilayer; that stretch reads VGAGVGAFTAVLLIALTCYFW. Topologically, residues 917-995 are cytoplasmic; the sequence is KKNQKLEYKY…QLKSSRAQNI (79 aa).

This sequence belongs to the ELAPOR family. Expressed in the animal half of the embryo during gastrulation, becoming restricted to the ventral ectoderm at stage 12.5. At the neurula stage, expressed in the anterior ectoderm surrounding the neural plate, and weakly in the epidermis. Expression is especially high in the presumptive hatching gland and cement gland regions. Surprisingly, by the tailbud stage (stage 22), expression is limited to the hatching gland and is not seen in the cement gland. Conversely, in tadpoles expressed broadly in the head, heart and fin. Expression in the head is seen in the primary mouth and in the brain, eyes, otic vesicles and olfactory pits.

The protein resides in the cell membrane. Functionally, functions as a regulator of the BMP signaling pathway and is involved in epidermal differentiation. This is Endosome/lysosome-associated apoptosis and autophagy regulator family member 2 (elapor2) from Xenopus laevis (African clawed frog).